The chain runs to 376 residues: Flap endonuclease 1 (376 aa).

Positions 1–105 are N-domain; the sequence is MGIKGLSKLL…GELNKRKENA (105 aa). Aspartate 34 lines the Mg(2+) pocket. Residues arginine 47 and arginine 71 each contribute to the DNA site. Aspartate 87, glutamate 159, glutamate 161, aspartate 180, and aspartate 182 together coordinate Mg(2+). The I-domain stretch occupies residues 123-254; that stretch reads QAKKLMKRTA…ITAFELIQQY (132 aa). Residue glutamate 159 participates in DNA binding. DNA-binding residues include glycine 232 and aspartate 234. Residue aspartate 234 coordinates Mg(2+). The segment at 336-344 is interaction with PCNA; that stretch reads AQGRLDSFF. The disordered stretch occupies residues 352–376; it reads SKSEAASGVKRKKPTTKAKESRKKK. Residues 360–376 are compositionally biased toward basic residues; it reads VKRKKPTTKAKESRKKK.

Belongs to the XPG/RAD2 endonuclease family. FEN1 subfamily. Interacts with PCNA. Three molecules of FEN1 bind to one PCNA trimer with each molecule binding to one PCNA monomer. PCNA stimulates the nuclease activity without altering cleavage specificity. Mg(2+) is required as a cofactor. Phosphorylated. Phosphorylation upon DNA damage induces relocalization to the nuclear plasma.

The protein localises to the nucleus. The protein resides in the nucleolus. Its subcellular location is the nucleoplasm. It is found in the mitochondrion. In terms of biological role, structure-specific nuclease with 5'-flap endonuclease and 5'-3' exonuclease activities involved in DNA replication and repair. During DNA replication, cleaves the 5'-overhanging flap structure that is generated by displacement synthesis when DNA polymerase encounters the 5'-end of a downstream Okazaki fragment. It enters the flap from the 5'-end and then tracks to cleave the flap base, leaving a nick for ligation. Also involved in the long patch base excision repair (LP-BER) pathway, by cleaving within the apurinic/apyrimidinic (AP) site-terminated flap. Acts as a genome stabilization factor that prevents flaps from equilibrating into structures that lead to duplications and deletions. Also possesses 5'-3' exonuclease activity on nicked or gapped double-stranded DNA, and exhibits RNase H activity. Also involved in replication and repair of rDNA and in repairing mitochondrial DNA. The protein is Flap endonuclease 1 of Entamoeba dispar (strain ATCC PRA-260 / SAW760).